Reading from the N-terminus, the 98-residue chain is Ribonuclease P protein component 4 (98 aa).

Residues C62, C65, C85, and C88 each contribute to the Zn(2+) site.

The protein belongs to the eukaryotic/archaeal RNase P protein component 4 family. Consists of a catalytic RNA component and at least 4-5 protein subunits. Requires Zn(2+) as cofactor.

Its subcellular location is the cytoplasm. The catalysed reaction is Endonucleolytic cleavage of RNA, removing 5'-extranucleotides from tRNA precursor.. Functionally, part of ribonuclease P, a protein complex that generates mature tRNA molecules by cleaving their 5'-ends. The chain is Ribonuclease P protein component 4 from Thermoplasma volcanium (strain ATCC 51530 / DSM 4299 / JCM 9571 / NBRC 15438 / GSS1).